Consider the following 542-residue polypeptide: Chaperonin GroEL (542 aa).

ATP contacts are provided by residues 29 to 32 (TLGP), 86 to 90 (DGTTT), glycine 413, and aspartate 493.

This sequence belongs to the chaperonin (HSP60) family. As to quaternary structure, forms a cylinder of 14 subunits composed of two heptameric rings stacked back-to-back. Interacts with the co-chaperonin GroES.

Its subcellular location is the cytoplasm. The enzyme catalyses ATP + H2O + a folded polypeptide = ADP + phosphate + an unfolded polypeptide.. Together with its co-chaperonin GroES, plays an essential role in assisting protein folding. The GroEL-GroES system forms a nano-cage that allows encapsulation of the non-native substrate proteins and provides a physical environment optimized to promote and accelerate protein folding. The protein is Chaperonin GroEL of Elusimicrobium minutum (strain Pei191).